Reading from the N-terminus, the 348-residue chain is Methylthioribose-1-phosphate isomerase (348 aa).

Substrate is bound by residues 51 to 53 (RGA), R94, and Q199. D240 serves as the catalytic Proton donor. Position 250-251 (250-251 (NK)) interacts with substrate.

Belongs to the eIF-2B alpha/beta/delta subunits family. MtnA subfamily.

It carries out the reaction 5-(methylsulfanyl)-alpha-D-ribose 1-phosphate = 5-(methylsulfanyl)-D-ribulose 1-phosphate. It functions in the pathway amino-acid biosynthesis; L-methionine biosynthesis via salvage pathway; L-methionine from S-methyl-5-thio-alpha-D-ribose 1-phosphate: step 1/6. Functionally, catalyzes the interconversion of methylthioribose-1-phosphate (MTR-1-P) into methylthioribulose-1-phosphate (MTRu-1-P). This Nitrosococcus oceani (strain ATCC 19707 / BCRC 17464 / JCM 30415 / NCIMB 11848 / C-107) protein is Methylthioribose-1-phosphate isomerase.